The chain runs to 297 residues: Coiled-coil domain-containing protein 159 (297 aa).

Residues 147 to 297 (EELELVREEV…SKSGRSFPPA (151 aa)) are a coiled coil. The interval 256–297 (LRGHKGHQCLSPPLPSWDSDSDCDQDLSQPPFSKSGRSFPPA) is disordered.

In terms of assembly, interacts with DYNLT2. Interacts with GGNBP1. Interacts with OSBP2.

Functions during spermatid development; may participate in the centrosome reduction procedure of spermatids and is required for the formation of the connecting piece/sperm head-tail coupling apparatus (HTCA) and the correct and tight attachment of the flagellum to the nuclear envelope. This chain is Coiled-coil domain-containing protein 159 (CCDC159), found in Homo sapiens (Human).